A 244-amino-acid polypeptide reads, in one-letter code: tRNA pseudouridine synthase A (244 aa).

The Nucleophile role is filled by Asp52. Position 110 (Tyr110) interacts with substrate.

The protein belongs to the tRNA pseudouridine synthase TruA family. As to quaternary structure, homodimer.

The catalysed reaction is uridine(38/39/40) in tRNA = pseudouridine(38/39/40) in tRNA. Functionally, formation of pseudouridine at positions 38, 39 and 40 in the anticodon stem and loop of transfer RNAs. The sequence is that of tRNA pseudouridine synthase A from Caldicellulosiruptor bescii (strain ATCC BAA-1888 / DSM 6725 / KCTC 15123 / Z-1320) (Anaerocellum thermophilum).